The sequence spans 854 residues: Zinc finger protein 341 (854 aa).

The segment at 53-76 (FLCGKCKKQFNSLPAFMTHKREQC) adopts a C2H2-type 1; atypical zinc-finger fold. A disordered region spans residues 152 to 217 (DQPMPQGPPP…GRPNPGGNGV (66 aa)). Polar residues predominate over residues 163-176 (QSSLNMHSVPSYLT). A compositionally biased stretch (pro residues) spans 177–210 (QPPPPPPPPPPLPPPPPPQPPPPPPQSLGPPGRP). 2 consecutive C2H2-type zinc fingers follow at residues 322–344 (LKCS…IRSH) and 350–372 (FQCI…MQTH). The segment at 399-434 (SRQEDEESTGLGQPLPGAPQPQALSTAGEEEGDKPE) is disordered. Low complexity predominate over residues 408 to 422 (GLGQPLPGAPQPQAL). 9 C2H2-type zinc fingers span residues 445–467 (YLCQ…MTQH), 473–497 (YKCV…IKSH), 503–525 (YRCH…QYSH), 540–564 (YKCV…TATH), 566–588 (FPCP…LPTH), 594–616 (FKCQ…AHIH), 622–644 (YKCS…MLIH), 650–677 (YKCP…ILSH), and 683–705 (HKCA…QRAH). Residues 731-763 (CRLGPQKDKDLQTRRPPQRRAAPRSCGSGGRKV) are disordered.

It belongs to the krueppel C2H2-type zinc-finger protein family. As to quaternary structure, binds DNA and to the STAT3 promoter.

It is found in the nucleus. Functionally, transcriptional activator of STAT3 involved in the regulation of immune homeostasis. Also able to activate STAT1 transcription. This is Zinc finger protein 341 (ZNF341) from Homo sapiens (Human).